We begin with the raw amino-acid sequence, 427 residues long: G2/mitotic-specific cyclin-B1 (427 aa).

Positions 33-126 (ATSKPGLRPR…DTPSPSPMET (94 aa)) are disordered. The residue at position 73 (Lys73) is an N6-acetyllysine. Residues 100–110 (EPEHVKEDKLS) are compositionally biased toward basic and acidic residues. Position 120 is a phosphoserine; by CDK1 (Ser120). Ser122 carries the post-translational modification Phosphoserine. Ser127 is modified (phosphoserine; by PLK1). Residue Ser141 is modified to Phosphoserine. Interaction with CDK2 stretches follow at residues 163–171 (EYVKDIYAY) and 252–255 (YEEM). Thr315 carries the phosphothreonine modification.

This sequence belongs to the cyclin family. Cyclin AB subfamily. In terms of assembly, interacts with the CDC2 protein kinase to form a serine/threonine kinase holoenzyme complex also known as maturation promoting factor (MPF). The cyclin subunit imparts substrate specificity to the complex. Binds HEI10. Interacts with catalytically active RALBP1 and CDC2 during mitosis to form an endocytotic complex during interphase. Interacts with CCNF; interaction is required for nuclear localization. Interacts with CDK5RAP3. Interacts with RFPL4A and UBE2A. Interacts with INCA1. Post-translationally, ubiquitinated by the SCF(NIPA) complex during interphase, leading to its destruction. Deubiquitinated by USP22 during G2/M phase. In terms of processing, phosphorylated by PLK1 at Ser-127 on centrosomes during prophase: phosphorylation by PLK1 does not cause nuclear import. Phosphorylation at Ser-141 was also reported to be mediated by PLK1 but Ser-127 seems to be the primary phosphorylation site.

The protein resides in the cytoplasm. The protein localises to the nucleus. It is found in the cytoskeleton. It localises to the microtubule organizing center. Its subcellular location is the centrosome. Its function is as follows. Essential for the control of the cell cycle at the G2/M (mitosis) transition. The chain is G2/mitotic-specific cyclin-B1 (CCNB1) from Bos taurus (Bovine).